The following is a 495-amino-acid chain: UDP-N-acetylmuramoyl-L-alanyl-D-glutamate--2,6-diaminopimelate ligase (495 aa).

Residue Ser29 coordinates UDP-N-acetyl-alpha-D-muramoyl-L-alanyl-D-glutamate. Residue 111 to 117 (GTNGKTS) participates in ATP binding. UDP-N-acetyl-alpha-D-muramoyl-L-alanyl-D-glutamate contacts are provided by residues 153 to 154 (TT), Ser180, Gln186, and Arg188. Lys220 is modified (N6-carboxylysine). Meso-2,6-diaminopimelate-binding positions include Arg384, 408 to 411 (DNPR), Gly459, and Glu463. Positions 408 to 411 (DNPR) match the Meso-diaminopimelate recognition motif motif.

It belongs to the MurCDEF family. MurE subfamily. Mg(2+) is required as a cofactor. Carboxylation is probably crucial for Mg(2+) binding and, consequently, for the gamma-phosphate positioning of ATP.

The protein resides in the cytoplasm. It catalyses the reaction UDP-N-acetyl-alpha-D-muramoyl-L-alanyl-D-glutamate + meso-2,6-diaminopimelate + ATP = UDP-N-acetyl-alpha-D-muramoyl-L-alanyl-gamma-D-glutamyl-meso-2,6-diaminopimelate + ADP + phosphate + H(+). It functions in the pathway cell wall biogenesis; peptidoglycan biosynthesis. Functionally, catalyzes the addition of meso-diaminopimelic acid to the nucleotide precursor UDP-N-acetylmuramoyl-L-alanyl-D-glutamate (UMAG) in the biosynthesis of bacterial cell-wall peptidoglycan. This Xanthomonas oryzae pv. oryzae (strain MAFF 311018) protein is UDP-N-acetylmuramoyl-L-alanyl-D-glutamate--2,6-diaminopimelate ligase.